We begin with the raw amino-acid sequence, 445 residues long: Probable cytosol aminopeptidase (445 aa).

Mn(2+)-binding residues include Lys217 and Asp222. Lys229 is an active-site residue. Mn(2+)-binding residues include Asp240, Asp299, and Glu301. Arg303 is a catalytic residue.

It belongs to the peptidase M17 family. Mn(2+) is required as a cofactor.

It localises to the cytoplasm. The enzyme catalyses Release of an N-terminal amino acid, Xaa-|-Yaa-, in which Xaa is preferably Leu, but may be other amino acids including Pro although not Arg or Lys, and Yaa may be Pro. Amino acid amides and methyl esters are also readily hydrolyzed, but rates on arylamides are exceedingly low.. The catalysed reaction is Release of an N-terminal amino acid, preferentially leucine, but not glutamic or aspartic acids.. Presumably involved in the processing and regular turnover of intracellular proteins. Catalyzes the removal of unsubstituted N-terminal amino acids from various peptides. The protein is Probable cytosol aminopeptidase (pepA) of Mycoplasma pneumoniae (strain ATCC 29342 / M129 / Subtype 1) (Mycoplasmoides pneumoniae).